The following is a 79-amino-acid chain: Small ribosomal subunit protein bS18 (79 aa).

Belongs to the bacterial ribosomal protein bS18 family. In terms of assembly, part of the 30S ribosomal subunit. Forms a tight heterodimer with protein bS6.

Its function is as follows. Binds as a heterodimer with protein bS6 to the central domain of the 16S rRNA, where it helps stabilize the platform of the 30S subunit. The sequence is that of Small ribosomal subunit protein bS18 from Onion yellows phytoplasma (strain OY-M).